The primary structure comprises 219 residues: Antigen 5 like allergen Cul n 1 (219 aa).

An N-terminal signal peptide occupies residues 1–19 (MIKKLSIVILFSCISFVLS). Cystine bridges form between Cys-23-Cys-45, Cys-28-Cys-124, and Cys-55-Cys-117. The region spanning 73 to 211 (LKVHNRLRNK…RHSGNKYFFW (139 aa)) is the SCP domain.

The protein belongs to the CRISP family. As to expression, expressed in salivary glands.

The protein localises to the secreted. The polypeptide is Antigen 5 like allergen Cul n 1 (Culicoides nubeculosus (Biting midge)).